A 702-amino-acid chain; its full sequence is Zinc finger CCCH domain-containing protein 62 (702 aa).

The disordered stretch occupies residues 1-77; that stretch reads MAAPAADDDD…SYDDPTFDPA (77 aa). Positions 18–54 are enriched in acidic residues; sequence EEDDGEEEEGSEEEVESDDEEEEEGEGYDWSEEDDPE. Residues 132–166 enclose the SAP domain; the sequence is LEKLKVYECKAYLRMHKLRLSGNKEVLLTRIRGQI. Disordered stretches follow at residues 288–349, 405–532, 546–602, and 634–673; these read EKHA…NTVQ, SRTS…QQQP, GGTS…RETH, and QMSQ…NPQR. Positions 298–325 are enriched in basic and acidic residues; the sequence is KTREVRIKDKENERMRRLNRNKENKSKG. 2 stretches are compositionally biased toward polar residues: residues 326 to 349 and 405 to 419; these read QDNM…NTVQ and SRTS…QAPS. Positions 430–448 are enriched in low complexity; it reads QQQQQQQPPKSIKPAPIQQ. Composition is skewed to polar residues over residues 472 to 502, 522 to 532, 546 to 565, and 575 to 591; these read SQEQ…QHGG, QQAVSYTQQQP, GGTS…NWGS, and PFTQ…NGSG. The C3H1-type zinc-finger motif lies at 674–702; the sequence is FRPWKPCFIYQQQGWCPYGENCKFMHDLR.

In Oryza sativa subsp. japonica (Rice), this protein is Zinc finger CCCH domain-containing protein 62.